Consider the following 301-residue polypeptide: tRNA dimethylallyltransferase (301 aa).

2–9 (GPTASGKT) contributes to the ATP binding site. 4 to 9 (TASGKT) contacts substrate. Interaction with substrate tRNA regions lie at residues 27–30 (DSAM) and 151–155 (QRIQR).

This sequence belongs to the IPP transferase family. In terms of assembly, monomer. Mg(2+) is required as a cofactor.

It carries out the reaction adenosine(37) in tRNA + dimethylallyl diphosphate = N(6)-dimethylallyladenosine(37) in tRNA + diphosphate. In terms of biological role, catalyzes the transfer of a dimethylallyl group onto the adenine at position 37 in tRNAs that read codons beginning with uridine, leading to the formation of N6-(dimethylallyl)adenosine (i(6)A). In Coxiella burnetii (strain CbuK_Q154) (Coxiella burnetii (strain Q154)), this protein is tRNA dimethylallyltransferase.